A 318-amino-acid polypeptide reads, in one-letter code: Malate dehydrogenase (318 aa).

NAD(+) contacts are provided by residues 10-15 (GAGNIG) and Asp34. Substrate is bound by residues Arg83 and Arg89. NAD(+) is bound by residues Asn96 and 119–121 (ITN). Substrate is bound by residues Asn121 and Arg152. His176 functions as the Proton acceptor in the catalytic mechanism.

Belongs to the LDH/MDH superfamily. MDH type 3 family.

It carries out the reaction (S)-malate + NAD(+) = oxaloacetate + NADH + H(+). Catalyzes the reversible oxidation of malate to oxaloacetate. This is Malate dehydrogenase from Rhodospirillum rubrum (strain ATCC 11170 / ATH 1.1.1 / DSM 467 / LMG 4362 / NCIMB 8255 / S1).